A 402-amino-acid chain; its full sequence is UDP-GlcNAc:betaGal beta-1,3-N-acetylglucosaminyltransferase 9 (402 aa).

Residues 1-10 (MRRRLRLRRD) are Cytoplasmic-facing. Residues 11 to 27 (ALLTLLLGASLGLLLYA) traverse the membrane as a helical; Signal-anchor for type II membrane protein segment. Topologically, residues 28-402 (QRDGAAPTAS…VAAGPFQWDS (375 aa)) are lumenal. Over residues 32–47 (AAPTASAPRGRGRAAP) the composition is skewed to low complexity. The interval 32 to 83 (AAPTASAPRGRGRAAPRPTPGPRAFQLPDAGAAPPAYEGDTPAPPTPTGPFD) is disordered.

This sequence belongs to the glycosyltransferase 31 family.

It localises to the golgi apparatus membrane. This is UDP-GlcNAc:betaGal beta-1,3-N-acetylglucosaminyltransferase 9 from Homo sapiens (Human).